The following is a 250-amino-acid chain: Pyrroloquinoline-quinone synthase (250 aa).

This sequence belongs to the PqqC family.

It catalyses the reaction 6-(2-amino-2-carboxyethyl)-7,8-dioxo-1,2,3,4,7,8-hexahydroquinoline-2,4-dicarboxylate + 3 O2 = pyrroloquinoline quinone + 2 H2O2 + 2 H2O + H(+). The protein operates within cofactor biosynthesis; pyrroloquinoline quinone biosynthesis. Its function is as follows. Ring cyclization and eight-electron oxidation of 3a-(2-amino-2-carboxyethyl)-4,5-dioxo-4,5,6,7,8,9-hexahydroquinoline-7,9-dicarboxylic-acid to PQQ. This chain is Pyrroloquinoline-quinone synthase, found in Pseudomonas aeruginosa (strain LESB58).